We begin with the raw amino-acid sequence, 160 residues long: ATP synthase subunit b (160 aa).

The chain crosses the membrane as a helical span at residues 5–27 (IEQILTQIIAFLIMLGVLKKFVW).

The protein belongs to the ATPase B chain family. As to quaternary structure, F-type ATPases have 2 components, F(1) - the catalytic core - and F(0) - the membrane proton channel. F(1) has five subunits: alpha(3), beta(3), gamma(1), delta(1), epsilon(1). F(0) has three main subunits: a(1), b(2) and c(10-14). The alpha and beta chains form an alternating ring which encloses part of the gamma chain. F(1) is attached to F(0) by a central stalk formed by the gamma and epsilon chains, while a peripheral stalk is formed by the delta and b chains.

It localises to the cell inner membrane. Its function is as follows. F(1)F(0) ATP synthase produces ATP from ADP in the presence of a proton or sodium gradient. F-type ATPases consist of two structural domains, F(1) containing the extramembraneous catalytic core and F(0) containing the membrane proton channel, linked together by a central stalk and a peripheral stalk. During catalysis, ATP synthesis in the catalytic domain of F(1) is coupled via a rotary mechanism of the central stalk subunits to proton translocation. Functionally, component of the F(0) channel, it forms part of the peripheral stalk, linking F(1) to F(0). The chain is ATP synthase subunit b from Protochlamydia amoebophila (strain UWE25).